The sequence spans 141 residues: Nucleoside diphosphate kinase (141 aa).

Positions 11, 59, 87, 93, 104, and 114 each coordinate ATP. Catalysis depends on His-117, which acts as the Pros-phosphohistidine intermediate.

The protein belongs to the NDK family. Homotetramer. Mg(2+) is required as a cofactor.

It is found in the cytoplasm. The enzyme catalyses a 2'-deoxyribonucleoside 5'-diphosphate + ATP = a 2'-deoxyribonucleoside 5'-triphosphate + ADP. It catalyses the reaction a ribonucleoside 5'-diphosphate + ATP = a ribonucleoside 5'-triphosphate + ADP. In terms of biological role, major role in the synthesis of nucleoside triphosphates other than ATP. The ATP gamma phosphate is transferred to the NDP beta phosphate via a ping-pong mechanism, using a phosphorylated active-site intermediate. The polypeptide is Nucleoside diphosphate kinase (Pseudomonas fluorescens (strain ATCC BAA-477 / NRRL B-23932 / Pf-5)).